The chain runs to 248 residues: Proteasome subunit alpha type-7 (248 aa).

Residue S130 is glycosylated (O-linked (GlcNAc) serine). The residue at position 153 (Y153) is a Phosphotyrosine. K227 carries the post-translational modification N6-acetyllysine.

The protein belongs to the peptidase T1A family. The 26S proteasome consists of a 20S proteasome core and two 19S regulatory subunits. The 20S proteasome core is a barrel-shaped complex made of 28 subunits that are arranged in four stacked rings. The two outer rings are each formed by seven alpha subunits, and the two inner rings are formed by seven beta subunits. The proteolytic activity is exerted by three beta-subunits PSMB5, PSMB6 and PSMB7. PSMA7 interacts directly with the PSMG1-PSMG2 heterodimer which promotes 20S proteasome assembly. Interacts with HIF1A. Interacts with RAB7A. Interacts with PRKN. Interacts with ABL1 and ABL2. Interacts with EMAP2. Interacts with MAVS.

It is found in the cytoplasm. The protein localises to the nucleus. Component of the 20S core proteasome complex involved in the proteolytic degradation of most intracellular proteins. This complex plays numerous essential roles within the cell by associating with different regulatory particles. Associated with two 19S regulatory particles, forms the 26S proteasome and thus participates in the ATP-dependent degradation of ubiquitinated proteins. The 26S proteasome plays a key role in the maintenance of protein homeostasis by removing misfolded or damaged proteins that could impair cellular functions, and by removing proteins whose functions are no longer required. Associated with the PA200 or PA28, the 20S proteasome mediates ubiquitin-independent protein degradation. This type of proteolysis is required in several pathways including spermatogenesis (20S-PA200 complex) or generation of a subset of MHC class I-presented antigenic peptides (20S-PA28 complex). Inhibits the transactivation function of HIF-1A under both normoxic and hypoxia-mimicking conditions. The interaction with EMAP2 increases the proteasome-mediated HIF-1A degradation under the hypoxic conditions. Plays a role in hepatitis C virus internal ribosome entry site-mediated translation. Mediates nuclear translocation of the androgen receptor (AR) and thereby enhances androgen-mediated transactivation. Promotes MAVS degradation and thereby negatively regulates MAVS-mediated innate immune response. The chain is Proteasome subunit alpha type-7 (PSMA7) from Bos taurus (Bovine).